A 975-amino-acid polypeptide reads, in one-letter code: Lateral signaling target protein 2 homolog (975 aa).

Disordered stretches follow at residues 299–458 (PLGS…GTDE) and 504–523 (YGTA…PSTS). 4 stretches are compositionally biased toward low complexity: residues 302–352 (SSSI…TTNT), 365–376 (NNHNSNSNSSSN), 383–400 (TLRS…TPTA), and 408–429 (PSHS…PADW). The segment covering 430-458 (SDGDDEDEDDDDIDVDEEDPESSDDGTDE) has biased composition (acidic residues). 2 positions are modified to phosphoserine: Ser-540 and Ser-541. 2 disordered regions span residues 556–633 (EEHM…SSLS) and 740–891 (DNVF…SPPA). Over residues 564 to 602 (GRHHRHHQSHHHHHHHRHSHQHQHRQPHPHRTTRSGRKR) the composition is skewed to basic residues. The span at 621–633 (LASGDTSAASSLS) shows a compositional bias: low complexity. Residues 751–770 (ATGQRHSAGASMQRNNTIDL) show a composition bias toward polar residues. Ser-796 bears the Phosphoserine mark. Low complexity-rich tracts occupy residues 802 to 860 (AASS…PVSA) and 877 to 890 (PSSA…LSPP). The segment at 895–955 (DGKAPRCMAC…VCRDCYVREV (61 aa)) adopts an FYVE-type zinc-finger fold. Positions 901, 904, 917, 920, 925, 928, 947, and 950 each coordinate Zn(2+).

This sequence belongs to the lst-2 family.

Functionally, negative regulator of epidermal growth factor receptor (EGFR) signaling. This chain is Lateral signaling target protein 2 homolog, found in Drosophila sechellia (Fruit fly).